Consider the following 125-residue polypeptide: Large ribosomal subunit protein bL12 (125 aa).

It belongs to the bacterial ribosomal protein bL12 family. In terms of assembly, homodimer. Part of the ribosomal stalk of the 50S ribosomal subunit. Forms a multimeric L10(L12)X complex, where L10 forms an elongated spine to which 2 to 4 L12 dimers bind in a sequential fashion. Binds GTP-bound translation factors.

Its function is as follows. Forms part of the ribosomal stalk which helps the ribosome interact with GTP-bound translation factors. Is thus essential for accurate translation. This chain is Large ribosomal subunit protein bL12, found in Helicobacter pylori (strain ATCC 700392 / 26695) (Campylobacter pylori).